Reading from the N-terminus, the 285-residue chain is CCR4-NOT transcription complex subunit 7 (285 aa).

5 residues coordinate a divalent metal cation: Asp40, Glu42, Asp161, Asp230, and Glu278.

It belongs to the CAF1 family. In terms of assembly, component of the CCR4-NOT complex. It depends on Mn(2+) as a cofactor. Requires Mg(2+) as cofactor. Co(2+) serves as cofactor.

Its subcellular location is the nucleus. It is found in the cytoplasm. It carries out the reaction Exonucleolytic cleavage of poly(A) to 5'-AMP.. Its function is as follows. Has 3'-5' poly(A) exoribonuclease activity for synthetic poly(A) RNA substrate. Catalytic component of the CCR4-NOT complex which is one of the major cellular mRNA deadenylases and is linked to various cellular processes including bulk mRNA degradation, miRNA-mediated repression, translational repression during translational initiation and general transcription regulation. During miRNA-mediated repression the complex also seems to act as translational repressor during translational initiation. Additional complex functions may be a consequence of its influence on mRNA expression. The sequence is that of CCR4-NOT transcription complex subunit 7 (cnot7) from Xenopus tropicalis (Western clawed frog).